We begin with the raw amino-acid sequence, 408 residues long: tRNA wybutosine-synthesizing protein 2 homolog (408 aa).

S-adenosyl-L-methionine is bound by residues S201, K208, E248, and 276-277; that span reads DN.

Belongs to the class I-like SAM-binding methyltransferase superfamily. TRM5/TYW2 family.

The catalysed reaction is 4-demethylwyosine(37) in tRNA(Phe) + S-adenosyl-L-methionine = 4-demethyl-7-[(3S)-3-amino-3-carboxypropyl]wyosine(37) in tRNA(Phe) + S-methyl-5'-thioadenosine + H(+). Its pathway is tRNA modification; wybutosine-tRNA(Phe) biosynthesis. In terms of biological role, S-adenosyl-L-methionine-dependent transferase that acts as a component of the wybutosine biosynthesis pathway. Wybutosine is a hyper modified guanosine with a tricyclic base found at the 3'-position adjacent to the anticodon of eukaryotic phenylalanine tRNA. Catalyzes the transfer of the alpha-amino-alpha-carboxypropyl (acp) group from S-adenosyl-L-methionine to the C-7 position of 4-demethylwyosine (imG-14) to produce wybutosine-86. This Danio rerio (Zebrafish) protein is tRNA wybutosine-synthesizing protein 2 homolog (trmt12).